The sequence spans 394 residues: tRNA-specific adenosine deaminase 1 (394 aa).

The 335-residue stretch at 54 to 388 (SLGCGTKCIG…TKKPHELLDF (335 aa)) folds into the A to I editase domain. Residue His-78 coordinates Zn(2+). Glu-80 (proton donor) is an active-site residue. Residues Arg-84 and Arg-85 each contribute to the 1D-myo-inositol hexakisphosphate site. Residues Cys-127 and Cys-191 each contribute to the Zn(2+) site. Residues Lys-194, Arg-197, Lys-320, Lys-357, and Lys-381 each coordinate 1D-myo-inositol hexakisphosphate.

It belongs to the ADAT1 family. The cofactor is 1D-myo-inositol hexakisphosphate. Widely expressed in early embryos, and later concentrates in the central nervous system.

The catalysed reaction is adenosine(37) in tRNA(Ala) + H2O + H(+) = inosine(37) in tRNA(Ala) + NH4(+). Functionally, specifically deaminates adenosine-37 to inosine in tRNA-Ala. The sequence is that of tRNA-specific adenosine deaminase 1 from Drosophila melanogaster (Fruit fly).